Here is a 512-residue protein sequence, read N- to C-terminus: Hyaluronidase PH-20 (512 aa).

A signal peptide spans 1–35 (MGELRFKHLFWGSFVESGGTFQTVLIFLLIPCSLT). Residue N46 is glycosylated (N-linked (GlcNAc...) asparagine). Disulfide bonds link C60–C351 and C223–C237. The Proton donor role is filled by E147. N-linked (GlcNAc...) asparagine glycosylation is present at N165. N293 and N368 each carry an N-linked (GlcNAc...) asparagine glycan. Cystine bridges form between C376/C387, C381/C435, and C437/C464.

It belongs to the glycosyl hydrolase 56 family.

The protein resides in the cell membrane. The enzyme catalyses Random hydrolysis of (1-&gt;4)-linkages between N-acetyl-beta-D-glucosamine and D-glucuronate residues in hyaluronate.. In terms of biological role, involved in sperm-egg adhesion. Upon fertilization sperm must first penetrate a layer of cumulus cells that surrounds the egg before reaching the zona pellucida. The cumulus cells are embedded in a matrix containing hyaluronic acid which is formed prior to ovulation. This protein aids in penetrating the layer of cumulus cells by digesting hyaluronic acid. In Mus musculus (Mouse), this protein is Hyaluronidase PH-20 (Spam1).